Consider the following 407-residue polypeptide: Cell division protein FtsZ (407 aa).

GTP-binding positions include 18 to 22, 105 to 107, glutamate 136, arginine 140, and aspartate 184; these read GGGVN and GTG. Residues 312 to 407 are disordered; that stretch reads FDGGQPPARR…EELDVPDFLK (96 aa). Low complexity-rich tracts occupy residues 336–348 and 368–377; these read AAPARSSAESTRP and APATASGESS. Residues 381-390 show a composition bias toward pro residues; sequence VSPPHVPPAR. The span at 396–407 shows a compositional bias: acidic residues; sequence QAEELDVPDFLK.

This sequence belongs to the FtsZ family. As to quaternary structure, homodimer. Polymerizes to form a dynamic ring structure in a strictly GTP-dependent manner. Interacts directly with several other division proteins.

The protein localises to the cytoplasm. Its function is as follows. Essential cell division protein that forms a contractile ring structure (Z ring) at the future cell division site. The regulation of the ring assembly controls the timing and the location of cell division. One of the functions of the FtsZ ring is to recruit other cell division proteins to the septum to produce a new cell wall between the dividing cells. Binds GTP and shows GTPase activity. This Streptomyces griseus protein is Cell division protein FtsZ.